Reading from the N-terminus, the 190-residue chain is Crossover junction endodeoxyribonuclease RuvC (190 aa).

Catalysis depends on residues Asp8, Glu67, and Asp139. Asp8, Glu67, and Asp139 together coordinate Mg(2+).

Belongs to the RuvC family. Homodimer which binds Holliday junction (HJ) DNA. The HJ becomes 2-fold symmetrical on binding to RuvC with unstacked arms; it has a different conformation from HJ DNA in complex with RuvA. In the full resolvosome a probable DNA-RuvA(4)-RuvB(12)-RuvC(2) complex forms which resolves the HJ. Mg(2+) is required as a cofactor.

The protein localises to the cytoplasm. It catalyses the reaction Endonucleolytic cleavage at a junction such as a reciprocal single-stranded crossover between two homologous DNA duplexes (Holliday junction).. In terms of biological role, the RuvA-RuvB-RuvC complex processes Holliday junction (HJ) DNA during genetic recombination and DNA repair. Endonuclease that resolves HJ intermediates. Cleaves cruciform DNA by making single-stranded nicks across the HJ at symmetrical positions within the homologous arms, yielding a 5'-phosphate and a 3'-hydroxyl group; requires a central core of homology in the junction. The consensus cleavage sequence is 5'-(A/T)TT(C/G)-3'. Cleavage occurs on the 3'-side of the TT dinucleotide at the point of strand exchange. HJ branch migration catalyzed by RuvA-RuvB allows RuvC to scan DNA until it finds its consensus sequence, where it cleaves and resolves the cruciform DNA. The chain is Crossover junction endodeoxyribonuclease RuvC from Actinobacillus succinogenes (strain ATCC 55618 / DSM 22257 / CCUG 43843 / 130Z).